Consider the following 339-residue polypeptide: Beta-ketoacyl-[acyl-carrier-protein] synthase III (339 aa).

Active-site residues include cysteine 121 and histidine 257. Residues 258 to 262 (QANLR) form an ACP-binding region. The active site involves asparagine 288.

The protein belongs to the thiolase-like superfamily. FabH family. In terms of assembly, homodimer.

The protein localises to the cytoplasm. It carries out the reaction malonyl-[ACP] + propanoyl-CoA + H(+) = 3-oxopentanoyl-[ACP] + CO2 + CoA. It catalyses the reaction 2-methylpropanoyl-CoA + malonyl-[ACP] + H(+) = 4-methyl-3-oxopentanoyl-[ACP] + CO2 + CoA. The catalysed reaction is malonyl-[ACP] + acetyl-CoA + H(+) = 3-oxobutanoyl-[ACP] + CO2 + CoA. The enzyme catalyses butanoyl-CoA + malonyl-[ACP] + H(+) = 3-oxohexanoyl-[ACP] + CO2 + CoA. It functions in the pathway lipid metabolism; fatty acid biosynthesis. Catalyzes the condensation reaction of fatty acid synthesis by the addition to an acyl acceptor of two carbons from malonyl-ACP. Catalyzes the first condensation reaction which initiates fatty acid synthesis and may therefore play a role in governing the total rate of fatty acid production. Possesses both acetoacetyl-ACP synthase and acetyl transacylase activities. Propionyl-CoA and isobutyryl-CoA were the two most preferred substrates, although acetyl-CoA and butyryl-CoA could also be accepted and elongated. Involved in the biosynthesis of R1128 polyketide. The chain is Beta-ketoacyl-[acyl-carrier-protein] synthase III from Streptomyces lividans.